Here is a 204-residue protein sequence, read N- to C-terminus: ATP synthase subunit 4, mitochondrial (204 aa).

Transmembrane regions (helical) follow at residues 27 to 47 (GILA…LYVV) and 52 to 72 (ILLV…APLY).

F-type ATP synthases have 2 components, the catalytic core F(1) and the membrane-embedded component F(0), linked together by a central stalk and a peripheral stalk. The central stalk, also called rotor shaft, is often seen as part of F(1). The peripheral stalk is seen as part of F(0). F(0) contains the membrane channel next to the rotor. F-type ATP synthases form dimers but each monomer functions independently in ATP generation. The dimer consists of 18 different polypeptides: ATP1 (subunit alpha, part of F(1), 3 molecules per monomer), ATP2 (subunit beta, part of F(1), 3 molecules per monomer), ATP3 (subunit gamma, part of the central stalk), ATP4 (subunit b, part of the peripheral stalk), ATP5/OSCP (subunit 5/OSCP, part of the peripheral stalk), ATP6 (subunit a, part of the peripheral stalk), ATP7 (subunit d, part of the peripheral stalk), ATP8 (subunit 8, part of the peripheral stalk), OLI1 (subunit c, part of the rotor, 10 molecules per monomer), ATP14 (subunit h, part of the peripheral stalk), ATP15 (subunit epsilon, part of the central stalk), ATP16 (subunit delta, part of the central stalk), ATP17 (subunit f, part of the peripheral stalk), ATP18 (subunit i/j, part of the peripheral stalk). Dimer-specific subunits are ATP19 (subunit k, at interface between monomers), ATP20 (subunit g, at interface between monomers), TIM11 (subunit e, at interface between monomers). Also contains subunit L.

It is found in the mitochondrion inner membrane. Mitochondrial membrane ATP synthase (F(1)F(0) ATP synthase or Complex V) produces ATP from ADP in the presence of a proton gradient across the membrane which is generated by electron transport complexes of the respiratory chain. F-type ATP synthases consist of two structural domains, F(1) - containing the extramembraneous catalytic core, and F(0) - containing the membrane proton channel, linked together by a central stalk and a peripheral stalk. During catalysis, ATP synthesis in the catalytic domain of F(1) is coupled via a rotary mechanism of the central stalk subunits to proton translocation. Part of the complex F(0) domain and the peripheral stalk, which acts as a stator to hold the catalytic alpha/ATP1(3)beta/ATP2(3) subcomplex and subunit a/ATP6 static relative to the rotary elements. In Pichia angusta (Yeast), this protein is ATP synthase subunit 4, mitochondrial.